The primary structure comprises 970 residues: Protein CLASP-3 (970 aa).

2 disordered regions span residues 314 to 377 (SRLA…QKAR) and 651 to 675 (NGISSGSGGSGNNHPKATPLRETPH). Residues 344–355 (GSRTRTSSITSN) are compositionally biased toward polar residues. Residues 905–943 (ITPCVIKAYQSTSSSVRKTVVYCLVAMVNRVGEQRMAPH) form an HEAT repeat.

It belongs to the CLASP family.

Its subcellular location is the cytoplasm. It localises to the cytoskeleton. Its function is as follows. Microtubule plus-end tracking protein that promotes the stabilization of dynamic microtubules. In Caenorhabditis briggsae, this protein is Protein CLASP-3 (cls-3).